We begin with the raw amino-acid sequence, 269 residues long: MDEPTILLTNDDGIESAGLRAVYDGLSTVGDVTAVAPAEDQSAVGRAISHEVTVHEHELGYAVEGTPSDCVVAGLEALVTDTDLVVAGCNRGANLGAYVLGRSGTVSAAVEATFFDVPAMAVSMYIPVREDAAFADIEANGDSYREAAKATTYLADHAVDAGVFEQCDYLNINAPVAEWGDAQMTVTRPSHLYEMDAEQDGDAVTLHDRIWEHMADGDIPDPEGTDRRAVVDGKVSVSPLTAPHTTEHHEALDAIAETYEPDDGGEAAD.

A divalent metal cation is bound by residues Asp11, Asp12, Ser42, and Asn90.

Belongs to the SurE nucleotidase family. The cofactor is a divalent metal cation.

It is found in the cytoplasm. The enzyme catalyses a ribonucleoside 5'-phosphate + H2O = a ribonucleoside + phosphate. Functionally, nucleotidase that shows phosphatase activity on nucleoside 5'-monophosphates. This Haloarcula marismortui (strain ATCC 43049 / DSM 3752 / JCM 8966 / VKM B-1809) (Halobacterium marismortui) protein is 5'-nucleotidase SurE.